The sequence spans 272 residues: Regulatory factor X-associated protein (272 aa).

Disordered regions lie at residues 1–20, 74–142, and 175–195; these read MEAQGVAEGAGPGAASGVPH, LCEG…KTCT, and KKKKSDQALNCGGTASTGSAG. The span at 79 to 94 shows a compositional bias: acidic residues; that stretch reads GDGEEEAGEDEADLLD. The short motif at 163–178 is the Nuclear localization signal element; the sequence is KKHRNKMYKDKYKKKK. Lys-198 participates in a covalent cross-link: Glycyl lysine isopeptide (Lys-Gly) (interchain with G-Cter in SUMO2). Residues 214–270 form a C-terminal domain region; the sequence is TGSFGDRPARPTLLEQVLNQKRLSLLRSPEVVQFLQKQQQLLNQQVLEQRQQQFPGT.

In terms of assembly, the RFX heterotetrameric complex consists of 2 molecules of RFX5 and one each of RFXAP and RFX-B/RFXANK; with each subunit representing a separate complementation group. RFX forms cooperative DNA binding complexes with X2BP and CBF/NF-Y. RFX associates with CIITA to form an active transcriptional complex. Phosphorylated. As to expression, ubiquitous.

It localises to the nucleus. Its function is as follows. Part of the RFX complex that binds to the X-box of MHC II promoters. In Homo sapiens (Human), this protein is Regulatory factor X-associated protein (RFXAP).